The following is a 422-amino-acid chain: Ubiquitin-conjugating enzyme E2 Q1 (422 aa).

At Met1 the chain carries N-acetylmethionine. Residues 1-24 show a composition bias toward low complexity; sequence MQQPQPQGQQQPGPGQQLGVQGAA. Disordered regions lie at residues 1–40 and 173–221; these read MQQP…PGPC and QPLP…EDDG. A compositionally biased stretch (gly residues) spans 25-35; that stretch reads PGAGGGPGGGP. Residues 185 to 200 are compositionally biased toward acidic residues; it reads VSSEDEDEEMPEDTED. The segment covering 212-221 has biased composition (basic and acidic residues); that stretch reads AEGKKSEDDG. One can recognise a UBC core domain in the interval 251–415; sequence QATDRLMKEL…VQIHEKNGWY (165 aa). Cys351 serves as the catalytic Glycyl thioester intermediate.

This sequence belongs to the ubiquitin-conjugating enzyme family. Monomer and homodimer. Only the homodimer is linked to ubiquitin through thiolester activation. Interacts (via N-terminus) with B4GALT1 (via N-terminal cytoplasmic domain); the interaction is direct. Post-translationally, autoubiquitinated in vitro in the presence of NEDD4L. Expressed in liver, brain, heart, spleen, lung, kidney, muscle, ovary, epididymis, testis and placenta. Also expressed in thymus and ES cells. Only expressed in the uterus during pregnancy. Expressed in oocytes and during subsequent embryonic development stages (4-cell stage, blastocyst, 8.5 dpc, 13.5 dpc, 16.5 dpc and 18.5 dpc).

It is found in the nucleus. The protein localises to the cell projection. It localises to the filopodium. The protein resides in the cytoplasm. Its subcellular location is the cytosol. It carries out the reaction S-ubiquitinyl-[E1 ubiquitin-activating enzyme]-L-cysteine + [E2 ubiquitin-conjugating enzyme]-L-cysteine = [E1 ubiquitin-activating enzyme]-L-cysteine + S-ubiquitinyl-[E2 ubiquitin-conjugating enzyme]-L-cysteine.. It functions in the pathway protein modification; protein ubiquitination. In terms of biological role, catalyzes the covalent attachment of ubiquitin to other proteins. Involved in female fertility and embryo implantation. May be involved in hormonal homeostasis in females. Involved in regulation of B4GALT1 cell surface expression, B4GALT1-mediated cell adhesion to laminin and embryoid body formation. The sequence is that of Ubiquitin-conjugating enzyme E2 Q1 (Ube2q1) from Mus musculus (Mouse).